Here is a 312-residue protein sequence, read N- to C-terminus: Acetyl-coenzyme A carboxylase carboxyl transferase subunit alpha (312 aa).

The CoA carboxyltransferase C-terminal domain maps to 36–286 (ELEKEIEKTF…KTYFLESVKA (251 aa)).

The protein belongs to the AccA family. In terms of assembly, acetyl-CoA carboxylase is a heterohexamer composed of biotin carboxyl carrier protein (AccB), biotin carboxylase (AccC) and two subunits each of ACCase subunit alpha (AccA) and ACCase subunit beta (AccD).

It is found in the cytoplasm. The catalysed reaction is N(6)-carboxybiotinyl-L-lysyl-[protein] + acetyl-CoA = N(6)-biotinyl-L-lysyl-[protein] + malonyl-CoA. It functions in the pathway lipid metabolism; malonyl-CoA biosynthesis; malonyl-CoA from acetyl-CoA: step 1/1. Component of the acetyl coenzyme A carboxylase (ACC) complex. First, biotin carboxylase catalyzes the carboxylation of biotin on its carrier protein (BCCP) and then the CO(2) group is transferred by the carboxyltransferase to acetyl-CoA to form malonyl-CoA. This Sulfurovum sp. (strain NBC37-1) protein is Acetyl-coenzyme A carboxylase carboxyl transferase subunit alpha.